The sequence spans 344 residues: Methionine aminopeptidase 1C, chloroplastic/mitochondrial (344 aa).

H172 serves as a coordination point for substrate. 3 residues coordinate a divalent metal cation: D189, D200, and H262. H269 is a substrate binding site. A divalent metal cation-binding residues include E296 and E327.

This sequence belongs to the peptidase M24A family. Methionine aminopeptidase type 1 subfamily. The cofactor is Co(2+). Requires Zn(2+) as cofactor. Mn(2+) is required as a cofactor. It depends on Fe(2+) as a cofactor. As to expression, ubiquitous.

The protein localises to the plastid. It localises to the chloroplast. The protein resides in the mitochondrion. It catalyses the reaction Release of N-terminal amino acids, preferentially methionine, from peptides and arylamides.. Functionally, removes the N-terminal methionine from nascent proteins. The N-terminal methionine is often cleaved when the second residue in the primary sequence is small and uncharged (Met-Ala-, Cys, Gly, Pro, Ser, Thr, or Val). This is Methionine aminopeptidase 1C, chloroplastic/mitochondrial (MAP1C) from Arabidopsis thaliana (Mouse-ear cress).